The sequence spans 251 residues: Pyridoxine 5'-phosphate synthase (251 aa).

Asparagine 7 serves as a coordination point for 3-amino-2-oxopropyl phosphate. 9 to 10 contacts 1-deoxy-D-xylulose 5-phosphate; that stretch reads DH. 3-amino-2-oxopropyl phosphate is bound at residue arginine 18. Histidine 43 serves as the catalytic Proton acceptor. Arginine 45 and histidine 50 together coordinate 1-deoxy-D-xylulose 5-phosphate. The active-site Proton acceptor is glutamate 70. Threonine 100 lines the 1-deoxy-D-xylulose 5-phosphate pocket. The Proton donor role is filled by histidine 198. Residues alanine 199 and 220-221 each bind 3-amino-2-oxopropyl phosphate; that span reads GH.

This sequence belongs to the PNP synthase family. In terms of assembly, homooctamer; tetramer of dimers.

The protein resides in the cytoplasm. The enzyme catalyses 3-amino-2-oxopropyl phosphate + 1-deoxy-D-xylulose 5-phosphate = pyridoxine 5'-phosphate + phosphate + 2 H2O + H(+). Its pathway is cofactor biosynthesis; pyridoxine 5'-phosphate biosynthesis; pyridoxine 5'-phosphate from D-erythrose 4-phosphate: step 5/5. In terms of biological role, catalyzes the complicated ring closure reaction between the two acyclic compounds 1-deoxy-D-xylulose-5-phosphate (DXP) and 3-amino-2-oxopropyl phosphate (1-amino-acetone-3-phosphate or AAP) to form pyridoxine 5'-phosphate (PNP) and inorganic phosphate. The protein is Pyridoxine 5'-phosphate synthase of Dechloromonas aromatica (strain RCB).